The chain runs to 742 residues: 5-methyltetrahydropteroyltriglutamate--homocysteine methyltransferase (742 aa).

Residues 18-21 (REWK) and Lys112 each bind 5-methyltetrahydropteroyltri-L-glutamate. L-homocysteine contacts are provided by residues 420-422 (IGS) and Glu473. Residues 420-422 (IGS) and Glu473 contribute to the L-methionine site. A 5-methyltetrahydropteroyltri-L-glutamate-binding site is contributed by Trp550. An L-homocysteine-binding site is contributed by Asp588. Asp588 contacts L-methionine. Glu594 is a binding site for 5-methyltetrahydropteroyltri-L-glutamate. Zn(2+)-binding residues include His630, Cys632, and Glu654. His683 serves as the catalytic Proton donor. Cys715 is a Zn(2+) binding site.

Belongs to the vitamin-B12 independent methionine synthase family. Zn(2+) is required as a cofactor.

It catalyses the reaction 5-methyltetrahydropteroyltri-L-glutamate + L-homocysteine = tetrahydropteroyltri-L-glutamate + L-methionine. The protein operates within amino-acid biosynthesis; L-methionine biosynthesis via de novo pathway; L-methionine from L-homocysteine (MetE route): step 1/1. Functionally, catalyzes the transfer of a methyl group from 5-methyltetrahydrofolate to homocysteine resulting in methionine formation. In Staphylococcus aureus (strain Mu3 / ATCC 700698), this protein is 5-methyltetrahydropteroyltriglutamate--homocysteine methyltransferase.